The sequence spans 233 residues: Phytol kinase (233 aa).

The next 6 membrane-spanning stretches (helical) occupy residues 9 to 29 (MALP…AVVL), 56 to 76 (VVLI…AGVF), 96 to 118 (VGRH…GGFF), 122 to 144 (LPIF…ALVG), 172 to 192 (FLVT…VLVV), and 213 to 233 (NLTV…LWLG).

The protein belongs to the polyprenol kinase family.

It is found in the cell membrane. It catalyses the reaction phytol + CTP = phytyl phosphate + CDP + H(+). Its pathway is cofactor biosynthesis; tocopherol biosynthesis. In terms of biological role, catalyzes the CTP-dependent phosphorylation of phytol to phytylmonophosphate (PMP). Can also use UTP as an alternative phosphate donor, but not ATP or GTP. Is involved in tocopherol biosynthesis, via the utilization of phytol generated by chlorophyll degradation. Also plays a significant but not critical role in the recycling of phytol for the biosynthesis of new chlorophyll molecules. This Synechocystis sp. (strain ATCC 27184 / PCC 6803 / Kazusa) protein is Phytol kinase.